The primary structure comprises 136 residues: Sec-independent protein translocase protein TatB (136 aa).

A helical transmembrane segment spans residues 1-21; sequence MFDIGFWELVLISVIGLVVLG. Residues 66-136 form a disordered region; that stretch reads ASKQGLSDLD…TTPPRQDKNE (71 aa). Composition is skewed to basic and acidic residues over residues 77 to 89 and 96 to 107; these read ELQKSIDEMKETA and YKKDIDDIKTSL. Residues 108-130 show a composition bias toward polar residues; the sequence is DKNPSGTTQQENSILDSSKTTPP.

This sequence belongs to the TatB family. The Tat system comprises two distinct complexes: a TatABC complex, containing multiple copies of TatA, TatB and TatC subunits, and a separate TatA complex, containing only TatA subunits. Substrates initially bind to the TatABC complex, which probably triggers association of the separate TatA complex to form the active translocon.

The protein resides in the cell inner membrane. Functionally, part of the twin-arginine translocation (Tat) system that transports large folded proteins containing a characteristic twin-arginine motif in their signal peptide across membranes. Together with TatC, TatB is part of a receptor directly interacting with Tat signal peptides. TatB may form an oligomeric binding site that transiently accommodates folded Tat precursor proteins before their translocation. The polypeptide is Sec-independent protein translocase protein TatB (Psychromonas ingrahamii (strain DSM 17664 / CCUG 51855 / 37)).